The chain runs to 179 residues: Acireductone dioxygenase (179 aa).

Fe(2+)-binding residues include histidine 97, histidine 99, glutamate 103, and histidine 141. Ni(2+)-binding residues include histidine 97, histidine 99, glutamate 103, and histidine 141.

Belongs to the acireductone dioxygenase (ARD) family. As to quaternary structure, monomer. Fe(2+) serves as cofactor. It depends on Ni(2+) as a cofactor.

It carries out the reaction 1,2-dihydroxy-5-(methylsulfanyl)pent-1-en-3-one + O2 = 3-(methylsulfanyl)propanoate + CO + formate + 2 H(+). The catalysed reaction is 1,2-dihydroxy-5-(methylsulfanyl)pent-1-en-3-one + O2 = 4-methylsulfanyl-2-oxobutanoate + formate + 2 H(+). It functions in the pathway amino-acid biosynthesis; L-methionine biosynthesis via salvage pathway; L-methionine from S-methyl-5-thio-alpha-D-ribose 1-phosphate: step 5/6. Functionally, catalyzes 2 different reactions between oxygen and the acireductone 1,2-dihydroxy-3-keto-5-methylthiopentene (DHK-MTPene) depending upon the metal bound in the active site. Fe-containing acireductone dioxygenase (Fe-ARD) produces formate and 2-keto-4-methylthiobutyrate (KMTB), the alpha-ketoacid precursor of methionine in the methionine recycle pathway. Ni-containing acireductone dioxygenase (Ni-ARD) produces methylthiopropionate, carbon monoxide and formate, and does not lie on the methionine recycle pathway. The sequence is that of Acireductone dioxygenase from Granulibacter bethesdensis (strain ATCC BAA-1260 / CGDNIH1).